Reading from the N-terminus, the 268-residue chain is Tryptophan synthase alpha chain (268 aa).

Residues E49 and D60 each act as proton acceptor in the active site.

Belongs to the TrpA family. As to quaternary structure, tetramer of two alpha and two beta chains.

It catalyses the reaction (1S,2R)-1-C-(indol-3-yl)glycerol 3-phosphate + L-serine = D-glyceraldehyde 3-phosphate + L-tryptophan + H2O. Its pathway is amino-acid biosynthesis; L-tryptophan biosynthesis; L-tryptophan from chorismate: step 5/5. Its function is as follows. The alpha subunit is responsible for the aldol cleavage of indoleglycerol phosphate to indole and glyceraldehyde 3-phosphate. This Vibrio parahaemolyticus serotype O3:K6 (strain RIMD 2210633) protein is Tryptophan synthase alpha chain.